Reading from the N-terminus, the 150-residue chain is Large ribosomal subunit protein bL9 (150 aa).

Belongs to the bacterial ribosomal protein bL9 family.

Its function is as follows. Binds to the 23S rRNA. The protein is Large ribosomal subunit protein bL9 of Shewanella woodyi (strain ATCC 51908 / MS32).